The chain runs to 163 residues: Nucleotide-binding protein DET1318 (163 aa).

It belongs to the YajQ family.

Nucleotide-binding protein. This chain is Nucleotide-binding protein DET1318, found in Dehalococcoides mccartyi (strain ATCC BAA-2266 / KCTC 15142 / 195) (Dehalococcoides ethenogenes (strain 195)).